We begin with the raw amino-acid sequence, 538 residues long: tRNA-2-methylthio-N(6)-dimethylallyladenosine synthase (538 aa).

The tract at residues 1 to 23 (MNEEQRLGRNGNTDAVSTKEAGS) is disordered. An MTTase N-terminal domain is found at 95–213 (KKFLVRTYGC…LPHLLRNALF (119 aa)). Residues C104, C140, C174, C250, C254, and C257 each coordinate [4Fe-4S] cluster. A Radical SAM core domain is found at 236–466 (REGKTQAWVN…NALVNDISAQ (231 aa)). The 64-residue stretch at 469–532 (LEYQDKVVEV…TWSLNGEMVE (64 aa)) folds into the TRAM domain.

This sequence belongs to the methylthiotransferase family. MiaB subfamily. As to quaternary structure, monomer. [4Fe-4S] cluster serves as cofactor.

The protein localises to the cytoplasm. It catalyses the reaction N(6)-dimethylallyladenosine(37) in tRNA + (sulfur carrier)-SH + AH2 + 2 S-adenosyl-L-methionine = 2-methylsulfanyl-N(6)-dimethylallyladenosine(37) in tRNA + (sulfur carrier)-H + 5'-deoxyadenosine + L-methionine + A + S-adenosyl-L-homocysteine + 2 H(+). In terms of biological role, catalyzes the methylthiolation of N6-(dimethylallyl)adenosine (i(6)A), leading to the formation of 2-methylthio-N6-(dimethylallyl)adenosine (ms(2)i(6)A) at position 37 in tRNAs that read codons beginning with uridine. The chain is tRNA-2-methylthio-N(6)-dimethylallyladenosine synthase from Halalkalibacterium halodurans (strain ATCC BAA-125 / DSM 18197 / FERM 7344 / JCM 9153 / C-125) (Bacillus halodurans).